The chain runs to 575 residues: RecBCD enzyme subunit RecD (575 aa).

An ATP-binding site is contributed by 170–177; sequence GGPGTGKT.

The protein belongs to the RecD family. As to quaternary structure, heterotrimer of RecB, RecC and RecD. All subunits contribute to DNA-binding.

It carries out the reaction Couples ATP hydrolysis with the unwinding of duplex DNA at the replication fork by translocating in the 5'-3' direction. This creates two antiparallel DNA single strands (ssDNA). The leading ssDNA polymer is the template for DNA polymerase III holoenzyme which synthesizes a continuous strand.. The enzyme catalyses ATP + H2O = ADP + phosphate + H(+). A helicase/nuclease that prepares dsDNA breaks (DSB) for recombinational DNA repair. Binds to DSBs and unwinds DNA via a highly rapid and processive ATP-dependent bidirectional helicase activity. Holoenzyme degrades any linearized DNA that is unable to undergo homologous recombination. In the holoenzyme this subunit has ssDNA-dependent ATPase and 5'-3' helicase activity. When added to pre-assembled RecBC greatly stimulates nuclease activity and augments holoenzyme processivity. Unlike the case in E.coli, suppresses RecA-dependent homologous recombination, is instead required for single-strand annealing pathway repair of DSB. Functionally, a helicase/nuclease that prepares dsDNA breaks (DSB) for recombinational DNA repair. Binds to DSBs and unwinds DNA via a highly rapid and processive ATP-dependent bidirectional helicase activity. Unwinds dsDNA until it encounters a Chi (crossover hotspot instigator) sequence from the 3' direction. Cuts ssDNA a few nucleotides 3' to the Chi site. The properties and activities of the enzyme are changed at Chi. The Chi-altered holoenzyme produces a long 3'-ssDNA overhang and facilitates RecA-binding to the ssDNA for homologous DNA recombination and repair. Holoenzyme degrades any linearized DNA that is unable to undergo homologous recombination. In the holoenzyme this subunit has ssDNA-dependent ATPase and 5'-3' helicase activity. When added to pre-assembled RecBC greatly stimulates nuclease activity and augments holoenzyme processivity. Negatively regulates the RecA-loading ability of RecBCD. This is RecBCD enzyme subunit RecD from Mycobacterium tuberculosis (strain CDC 1551 / Oshkosh).